We begin with the raw amino-acid sequence, 243 residues long: Small ribosomal subunit protein uS2 (243 aa).

The protein belongs to the universal ribosomal protein uS2 family.

In Pseudoalteromonas atlantica (strain T6c / ATCC BAA-1087), this protein is Small ribosomal subunit protein uS2.